Consider the following 380-residue polypeptide: Ribosomal RNA large subunit methyltransferase F (380 aa).

The interval 1 to 32 is disordered; the sequence is MSHKTKPSTQERKAGKPSAPKRKVISKSPNSK.

This sequence belongs to the methyltransferase superfamily. METTL16/RlmF family.

The protein localises to the cytoplasm. It catalyses the reaction adenosine(1618) in 23S rRNA + S-adenosyl-L-methionine = N(6)-methyladenosine(1618) in 23S rRNA + S-adenosyl-L-homocysteine + H(+). In terms of biological role, specifically methylates the adenine in position 1618 of 23S rRNA. In Shewanella halifaxensis (strain HAW-EB4), this protein is Ribosomal RNA large subunit methyltransferase F.